We begin with the raw amino-acid sequence, 393 residues long: Formate-dependent phosphoribosylglycinamide formyltransferase (393 aa).

N(1)-(5-phospho-beta-D-ribosyl)glycinamide is bound by residues glutamate 22 to leucine 23 and glutamate 82. Residues arginine 114, lysine 155, serine 160–glutamine 165, glutamate 195–isoleucine 198, and glutamate 203 contribute to the ATP site. Residues arginine 119 to leucine 308 form the ATP-grasp domain. Residues glutamate 267 and glutamate 279 each contribute to the Mg(2+) site. N(1)-(5-phospho-beta-D-ribosyl)glycinamide is bound by residues aspartate 286, lysine 356, and arginine 363–arginine 364.

This sequence belongs to the PurK/PurT family. Homodimer.

It carries out the reaction N(1)-(5-phospho-beta-D-ribosyl)glycinamide + formate + ATP = N(2)-formyl-N(1)-(5-phospho-beta-D-ribosyl)glycinamide + ADP + phosphate + H(+). The protein operates within purine metabolism; IMP biosynthesis via de novo pathway; N(2)-formyl-N(1)-(5-phospho-D-ribosyl)glycinamide from N(1)-(5-phospho-D-ribosyl)glycinamide (formate route): step 1/1. Involved in the de novo purine biosynthesis. Catalyzes the transfer of formate to 5-phospho-ribosyl-glycinamide (GAR), producing 5-phospho-ribosyl-N-formylglycinamide (FGAR). Formate is provided by PurU via hydrolysis of 10-formyl-tetrahydrofolate. This is Formate-dependent phosphoribosylglycinamide formyltransferase from Actinobacillus pleuropneumoniae serotype 3 (strain JL03).